Here is a 308-residue protein sequence, read N- to C-terminus: MATTATTTPSATSLTTLHRRIPLFPTTTTLLSLSSSSKPLFLSLSSTRSFPTHLYCIKKDDIDITFFEQDNPDEEITFDPPEKPEGYIPPRAVDEPPFESEEEIALAYEELYGAAYSGESLLGNDVYAMDSKIKKATGFGSKSKKEKIRDGFEENVVQVRRVTKVVKGGKHMRFRAIVVVGDKKGQVGVGVGKAKEVVSAVQKAAVDARRNIITVPMTKYLTFPHRNEADYGAARVMLRPAAPGTGVIAGGAVRTVLEMAGVENALGKQLGSNNALNNARATIVAVQTMRQFSDVARDRGIPMEELWK.

A chloroplast-targeting transit peptide spans 1 to 55; it reads MATTATTTPSATSLTTLHRRIPLFPTTTTLLSLSSSSKPLFLSLSSTRSFPTHLY. Residues 152–215 form the S5 DRBM domain; sequence FEENVVQVRR…VDARRNIITV (64 aa).

Component of the chloroplast small ribosomal subunit (SSU). Mature 70S chloroplast ribosomes of higher plants consist of a small (30S) and a large (50S) subunit. The 30S small subunit contains 1 molecule of ribosomal RNA (16S rRNA) and 24 different proteins. The 50S large subunit contains 3 rRNA molecules (23S, 5S and 4.5S rRNA) and 33 different proteins. uS5c binds directly to 16S ribosomal RNA.

The protein localises to the plastid. Its subcellular location is the chloroplast. Functionally, component of the chloroplast ribosome (chloro-ribosome), a dedicated translation machinery responsible for the synthesis of chloroplast genome-encoded proteins, including proteins of the transcription and translation machinery and components of the photosynthetic apparatus. In Spinacia oleracea (Spinach), this protein is Small ribosomal subunit protein uS5c (rps5).